The chain runs to 713 residues: Probable 1-deoxy-D-xylulose-5-phosphate synthase 2, chloroplastic (713 aa).

The N-terminal 30 residues, 1–30 (MALQASSSPSMFRAIPTNTNASCRRKLQVR), are a transit peptide targeting the chloroplast. Thiamine diphosphate is bound by residues histidine 140 and 181–183 (GHS). Aspartate 212 is a Mg(2+) binding site. Thiamine diphosphate contacts are provided by residues 213-214 (GA), asparagine 241, tyrosine 362, and glutamate 444. Asparagine 241 is a binding site for Mg(2+).

The protein belongs to the transketolase family. DXPS subfamily. As to quaternary structure, homodimer. The cofactor is Mg(2+). Thiamine diphosphate serves as cofactor.

It is found in the plastid. Its subcellular location is the chloroplast. The catalysed reaction is D-glyceraldehyde 3-phosphate + pyruvate + H(+) = 1-deoxy-D-xylulose 5-phosphate + CO2. The protein operates within metabolic intermediate biosynthesis; 1-deoxy-D-xylulose 5-phosphate biosynthesis; 1-deoxy-D-xylulose 5-phosphate from D-glyceraldehyde 3-phosphate and pyruvate: step 1/1. Functionally, catalyzes the acyloin condensation reaction between C atoms 2 and 3 of pyruvate and glyceraldehyde 3-phosphate to yield 1-deoxy-D-xylulose-5-phosphate (DXP). Is a limiting enzyme for plastidic isoprenoid biosynthesis and essential for chloroplast development. This is Probable 1-deoxy-D-xylulose-5-phosphate synthase 2, chloroplastic from Oryza sativa subsp. japonica (Rice).